A 115-amino-acid polypeptide reads, in one-letter code: NAD(P)H-quinone oxidoreductase subunit M (115 aa).

Belongs to the complex I NdhM subunit family. In terms of assembly, NDH-1 can be composed of about 15 different subunits; different subcomplexes with different compositions have been identified which probably have different functions.

The protein localises to the cellular thylakoid membrane. It carries out the reaction a plastoquinone + NADH + (n+1) H(+)(in) = a plastoquinol + NAD(+) + n H(+)(out). The catalysed reaction is a plastoquinone + NADPH + (n+1) H(+)(in) = a plastoquinol + NADP(+) + n H(+)(out). In terms of biological role, NDH-1 shuttles electrons from an unknown electron donor, via FMN and iron-sulfur (Fe-S) centers, to quinones in the respiratory and/or the photosynthetic chain. The immediate electron acceptor for the enzyme in this species is believed to be plastoquinone. Couples the redox reaction to proton translocation, and thus conserves the redox energy in a proton gradient. Cyanobacterial NDH-1 also plays a role in inorganic carbon-concentration. This Prochlorococcus marinus (strain MIT 9313) protein is NAD(P)H-quinone oxidoreductase subunit M.